The chain runs to 188 residues: Methylamine dehydrogenase light chain (188 aa).

Positions 1-57 (MLGNFRFDDMVEKLSRRVAGRTSRRGAIGRLGTVLAGAALVPLLPVDRRGRVSRANA) form a signal peptide, tat-type signal. Intrachain disulfides connect Cys80–Cys145, Cys86–Cys118, Cys93–Cys178, Cys95–Cys143, Cys103–Cys134, and Cys135–Cys166. Trp114 carries the post-translational modification Tryptophylquinone. The tryptophan tryptophylquinone (Trp-Trp) cross-link spans 114 to 165 (WVASCYNPTDGQSYLIAYRDCCGYNVSGRCPCLNTEGELPVYRPEFANDIIW).

It belongs to the aromatic amine dehydrogenase light chain family. In terms of assembly, heterotetramer of two light and two heavy chains. The cofactor is tryptophan tryptophylquinone residue. Predicted to be exported by the Tat system. The position of the signal peptide cleavage has been experimentally proven. In terms of processing, tryptophan tryptophylquinone (TTQ) is formed by oxidation of the indole ring of a tryptophan to form tryptophylquinone followed by covalent cross-linking with another tryptophan residue.

The protein localises to the periplasm. It catalyses the reaction 2 oxidized [amicyanin] + methylamine + H2O = 2 reduced [amicyanin] + formaldehyde + NH4(+) + 2 H(+). The protein operates within one-carbon metabolism; methylamine degradation; formaldehyde from methylamine: step 1/1. In terms of biological role, methylamine dehydrogenase carries out the oxidation of methylamine. Electrons are passed from methylamine dehydrogenase to amicyanin. The chain is Methylamine dehydrogenase light chain (mauA) from Paracoccus versutus (Thiobacillus versutus).